Consider the following 559-residue polypeptide: Sporulation protein kinase mde3 (559 aa).

One can recognise a Protein kinase domain in the interval 21-323; that stretch reads YLVKQKLGDG…TAKYCKEVFF (303 aa). ATP contacts are provided by residues 27 to 35 and K53; that span reads LGDGSFGTV. D150 functions as the Proton acceptor in the catalytic mechanism.

It belongs to the protein kinase superfamily. Ser/Thr protein kinase family.

It catalyses the reaction L-seryl-[protein] + ATP = O-phospho-L-seryl-[protein] + ADP + H(+). The catalysed reaction is L-threonyl-[protein] + ATP = O-phospho-L-threonyl-[protein] + ADP + H(+). Its function is as follows. Protein kinase which is essential for spore formation. The polypeptide is Sporulation protein kinase mde3 (mde3) (Schizosaccharomyces pombe (strain 972 / ATCC 24843) (Fission yeast)).